Consider the following 92-residue polypeptide: Small ribosomal subunit protein uS19 (92 aa).

This sequence belongs to the universal ribosomal protein uS19 family.

Its function is as follows. Protein S19 forms a complex with S13 that binds strongly to the 16S ribosomal RNA. In Mycoplasmopsis synoviae (strain 53) (Mycoplasma synoviae), this protein is Small ribosomal subunit protein uS19.